The primary structure comprises 408 residues: UDP-N-acetylglucosamine--dolichyl-phosphate N-acetylglucosaminephosphotransferase (408 aa).

The Lumenal segment spans residues 1 to 10; it reads MWAFSELPMP. Residues 11–38 form a helical membrane-spanning segment; that stretch reads LLINLIVSLLGFVATVTLIPAFRGHFIA. At 39 to 58 the chain is on the cytoplasmic side; that stretch reads ARLCGQDLNKTSRQQIPESQ. Residues 44-46 and Glu-56 contribute to the UDP-N-acetyl-alpha-D-glucosamine site; that span reads QDL. A tunicamycin A1-binding site is contributed by Leu-46. Residues 59–78 traverse the membrane as a helical segment; it reads GVISGAVFLIILFCFIPFPF. Residues 79–91 are Lumenal-facing; that stretch reads LNCFVKEQCKAFP. A helical membrane pass occupies residues 92–118; sequence HHEFVALIGALLAICCMIFLGFADDVL. Asn-119 contacts tunicamycin A1. The Cytoplasmic portion of the chain corresponds to 119-121; the sequence is NLR. Residues 122-143 form a helical membrane-spanning segment; the sequence is WRHKLLLPTAASLPLLMVYFTN. A dolichyl phosphate-binding site is contributed by Lys-125. Residues 144-166 lie on the Lumenal side of the membrane; sequence FGNTTIVVPKPFRPILGLHLDLG. Asn-146 is a glycosylation site (N-linked (GlcNAc...) asparagine). Residues 167–186 traverse the membrane as a helical segment; the sequence is ILYYVYMGLLAVFCTNAINI. 178–186 is a binding site for dolichyl phosphate; the sequence is VFCTNAINI. Residue Asn-185 participates in tunicamycin A1 binding. Asn-185 contributes to the Mg(2+) binding site. Residues 187 to 192 lie on the Cytoplasmic side of the membrane; that stretch reads LAGING. Asn-191 lines the UDP-N-acetyl-alpha-D-glucosamine pocket. The chain crosses the membrane as a helical span at residues 193 to 213; that stretch reads LEAGQSLVISASIIVFNLVEL. Topologically, residues 214–218 are lumenal; sequence EGDCR. Residues 219 to 242 traverse the membrane as a helical segment; the sequence is DDHVFSLYFMIPFFFTTLGLLYHN. Residues 243–250 lie on the Cytoplasmic side of the membrane; it reads WYPSRVFV. A helical membrane pass occupies residues 251 to 269; the sequence is GDTFCYFAGMTFAVVGILG. Asp-252 serves as a coordination point for tunicamycin A1. Position 252 (Asp-252) interacts with Mg(2+). The Lumenal segment spans residues 270–271; that stretch reads HF. Residues 272–293 form a helical membrane-spanning segment; sequence SKTMLLFFMPQVFNFLYSLPQL. Topologically, residues 294 to 375 are cytoplasmic; sequence LHIIPCPRHR…LLLKVLGPIH (82 aa). Position 301-303 (301-303) interacts with UDP-N-acetyl-alpha-D-glucosamine; the sequence is RHR. Arg-303 contacts tunicamycin A1. Residues 376-400 form a helical membrane-spanning segment; sequence ERNLTLLLLLLQILGSAITFSIRYQ. At 401 to 408 the chain is on the lumenal side; the sequence is LVRLFYDV.

It belongs to the glycosyltransferase 4 family. Homodimer. Mg(2+) is required as a cofactor.

It localises to the endoplasmic reticulum membrane. The catalysed reaction is a di-trans,poly-cis-dolichyl phosphate + UDP-N-acetyl-alpha-D-glucosamine = an N-acetyl-alpha-D-glucosaminyl-diphospho-di-trans,poly-cis-dolichol + UMP. Its pathway is protein modification; protein glycosylation. Its activity is regulated as follows. Inhibited by natural nucleoside antibiotic tunicamycin, which acts as a structural analog and competitor of UDP-GlcNAc. Activated by mannosylphosphoryldolichol and phospholipids such as phosphatidylglycerol and phosphatidylcholine. Its function is as follows. UDP-N-acetylglucosamine--dolichyl-phosphate N-acetylglucosaminephosphotransferase that operates in the biosynthetic pathway of dolichol-linked oligosaccharides, the glycan precursors employed in protein asparagine (N)-glycosylation. The assembly of dolichol-linked oligosaccharides begins on the cytosolic side of the endoplasmic reticulum membrane and finishes in its lumen. The sequential addition of sugars to dolichol pyrophosphate produces dolichol-linked oligosaccharides containing fourteen sugars, including two GlcNAcs, nine mannoses and three glucoses. Once assembled, the oligosaccharide is transferred from the lipid to nascent proteins by oligosaccharyltransferases. Catalyzes the initial step of dolichol-linked oligosaccharide biosynthesis, transfering GlcNAc-1-P from cytosolic UDP-GlcNAc onto the carrier lipid dolichyl phosphate (P-dolichol), yielding GlcNAc-P-P-dolichol embedded in the cytoplasmic leaflet of the endoplasmic reticulum membrane. The polypeptide is UDP-N-acetylglucosamine--dolichyl-phosphate N-acetylglucosaminephosphotransferase (Homo sapiens (Human)).